A 474-amino-acid polypeptide reads, in one-letter code: Glutamate--tRNA ligase (474 aa).

A 'HIGH' region motif is present at residues 9–19; that stretch reads PSPTGYLHVGG. The short motif at 240–244 is the 'KMSKS' region element; it reads KLSKR. Residue Lys243 participates in ATP binding.

This sequence belongs to the class-I aminoacyl-tRNA synthetase family. Glutamate--tRNA ligase type 1 subfamily. Monomer.

It is found in the cytoplasm. The enzyme catalyses tRNA(Glu) + L-glutamate + ATP = L-glutamyl-tRNA(Glu) + AMP + diphosphate. Its function is as follows. Catalyzes the attachment of glutamate to tRNA(Glu) in a two-step reaction: glutamate is first activated by ATP to form Glu-AMP and then transferred to the acceptor end of tRNA(Glu). In Vibrio vulnificus (strain CMCP6), this protein is Glutamate--tRNA ligase.